Here is a 434-residue protein sequence, read N- to C-terminus: Methylenetetrahydrofolate--tRNA-(uracil-5-)-methyltransferase TrmFO (434 aa).

9-14 serves as a coordination point for FAD; that stretch reads GAGLAG.

It belongs to the MnmG family. TrmFO subfamily. FAD is required as a cofactor.

It localises to the cytoplasm. The catalysed reaction is uridine(54) in tRNA + (6R)-5,10-methylene-5,6,7,8-tetrahydrofolate + NADH + H(+) = 5-methyluridine(54) in tRNA + (6S)-5,6,7,8-tetrahydrofolate + NAD(+). It catalyses the reaction uridine(54) in tRNA + (6R)-5,10-methylene-5,6,7,8-tetrahydrofolate + NADPH + H(+) = 5-methyluridine(54) in tRNA + (6S)-5,6,7,8-tetrahydrofolate + NADP(+). Its function is as follows. Catalyzes the folate-dependent formation of 5-methyl-uridine at position 54 (M-5-U54) in all tRNAs. This chain is Methylenetetrahydrofolate--tRNA-(uracil-5-)-methyltransferase TrmFO, found in Listeria welshimeri serovar 6b (strain ATCC 35897 / DSM 20650 / CCUG 15529 / CIP 8149 / NCTC 11857 / SLCC 5334 / V8).